Reading from the N-terminus, the 205-residue chain is Guanylate kinase (205 aa).

The Guanylate kinase-like domain maps to 17–195; that stretch reads PRLTVLSGPS…VSRELLALML (179 aa). ATP is bound at residue 24 to 31; that stretch reads GPSGVGKS.

Belongs to the guanylate kinase family.

The protein resides in the cytoplasm. The catalysed reaction is GMP + ATP = GDP + ADP. Functionally, essential for recycling GMP and indirectly, cGMP. This chain is Guanylate kinase, found in Streptomyces kasugaensis.